The sequence spans 313 residues: Alpha-S1-casein (313 aa).

The first 15 residues, 1-15, serve as a signal peptide directing secretion; sequence MKLLILTCLVAAAFA. Residues 77 to 96 show a composition bias toward low complexity; sequence ASEEQAMASAQEDSSISSSS. The interval 77-111 is disordered; sequence ASEEQAMASAQEDSSISSSSEESEEAIPNITEQKN. S90, S91, S93, S94, S95, and S96 each carry phosphoserine. Tandem repeats lie at residues 135-140, 141-146, 147-152, 153-158, 159-164, 165-170, 171-176, 177-182, 183-188, 189-194, 195-200, 201-206, 207-212, 213-218, and 219-224. A 15 X 6 AA tandem repeats region spans residues 135–224; it reads LLQKASLAKQ…QQASLAQKHH (90 aa).

Belongs to the alpha-casein family. Mammary gland specific. Secreted in milk.

It localises to the secreted. Functionally, important role in the capacity of milk to transport calcium phosphate. The polypeptide is Alpha-S1-casein (Csn1s1) (Mus musculus (Mouse)).